Consider the following 194-residue polypeptide: 7-methyl-GTP pyrophosphatase (194 aa).

The active-site Proton acceptor is aspartate 70.

It belongs to the Maf family. YceF subfamily. Requires a divalent metal cation as cofactor.

It is found in the cytoplasm. The catalysed reaction is N(7)-methyl-GTP + H2O = N(7)-methyl-GMP + diphosphate + H(+). Its function is as follows. Nucleoside triphosphate pyrophosphatase that hydrolyzes 7-methyl-GTP (m(7)GTP). May have a dual role in cell division arrest and in preventing the incorporation of modified nucleotides into cellular nucleic acids. This chain is 7-methyl-GTP pyrophosphatase, found in Vibrio vulnificus (strain YJ016).